The chain runs to 324 residues: NAC domain-containing protein 21/22 (324 aa).

One can recognise an NAC domain in the interval 19 to 171 (LPPGFRFHPK…DWVLCRVFHK (153 aa)). The Bipartite nuclear localization signal signature appears at 120–137 (RKTLVFYQGRAPRGRKTD).

Dimer. Interacts with SINAT5. In terms of processing, ubiquitinated. The interaction with SINAT5 mediate its proteasome-dependent degradation. In terms of tissue distribution, predominantly expressed in the root tip and in lateral root initiation sites. Also detected in expanding cotyledon, and in leaf primordia.

Its subcellular location is the nucleus. Functionally, transcriptional activator that mediates auxin signaling to promote lateral root development. Activates the expression of two downstream auxin-responsive genes, DBP and AIR3. The protein is NAC domain-containing protein 21/22 (NAC021) of Arabidopsis thaliana (Mouse-ear cress).